The chain runs to 91 residues: UPF0250 protein HCH_05838 (91 aa).

It belongs to the UPF0250 family.

The chain is UPF0250 protein HCH_05838 from Hahella chejuensis (strain KCTC 2396).